Here is a 476-residue protein sequence, read N- to C-terminus: Ankyrin repeat, SAM and basic leucine zipper domain-containing protein 1 (476 aa).

Ser18 and Ser21 each carry phosphoserine. ANK repeat units lie at residues 46 to 75 (EKNE…SIDS), 79 to 108 (YGWT…NASF), 111 to 145 (DKQT…DPNV), 149 to 178 (RLMT…EVNT), 182 to 211 (NGYT…DKML), and 215 to 244 (DGKT…PLEG). Residues 273–335 (SYAAFEDLEI…KILAALKELE (63 aa)) form the SAM domain.

In terms of assembly, interacts with DDX4, PIWIL1, RANBP9 and TDRD1.

It localises to the cytoplasm. Plays a central role during spermatogenesis by repressing transposable elements and preventing their mobilization, which is essential for the germline integrity. Acts via the piRNA metabolic process, which mediates the repression of transposable elements during meiosis by forming complexes composed of piRNAs and Piwi proteins and governs the methylation and subsequent repression of transposons. Its association with pi-bodies suggests a participation in the primary piRNAs metabolic process. Required prior to the pachytene stage to facilitate the production of multiple types of piRNAs, including those associated with repeats involved in the regulation of retrotransposons. May act by mediating protein-protein interactions during germ cell maturation. The polypeptide is Ankyrin repeat, SAM and basic leucine zipper domain-containing protein 1 (ASZ1) (Dasypus novemcinctus (Nine-banded armadillo)).